Reading from the N-terminus, the 233-residue chain is Ribose-5-phosphate isomerase A (233 aa).

Residues 28–31 (SGST), 83–86 (DGAD), and 96–99 (KGGG) contribute to the substrate site. The active-site Proton acceptor is the Glu105. A substrate-binding site is contributed by Lys123.

This sequence belongs to the ribose 5-phosphate isomerase family. In terms of assembly, homodimer.

It carries out the reaction aldehydo-D-ribose 5-phosphate = D-ribulose 5-phosphate. The protein operates within carbohydrate degradation; pentose phosphate pathway; D-ribose 5-phosphate from D-ribulose 5-phosphate (non-oxidative stage): step 1/1. Functionally, catalyzes the reversible conversion of ribose-5-phosphate to ribulose 5-phosphate. The chain is Ribose-5-phosphate isomerase A from Maricaulis maris (strain MCS10) (Caulobacter maris).